The following is a 553-amino-acid chain: MSDIALTVSVLALVAVVGLWIGNIKVRGVGFGIGGVLFGGIIVGHFVDQAGMTLSSDMLHFIQEFGLILFVYTIGIQVGPGFFASLRVSGLRLNLFAILIVIIGGLVTAILHKIFAIPLPVVLGIFSGAVTNTPALGAGQQILRDLGTPMEAVDQMGMSYAMAYPFGICGILLTMWLMRMIFRVNVEAEAKQHEDTLSNGHSLIQTMNIRVENPNLNNMAIQDVPILNSDKIICSRLKRDETLMVPSPGTIIQSGDLLHLVGQPVDLHNAQLVIGQEVDTSLSTRGTDLRVERVVVTNEKVLGKRIRDLHFKERYDVVISRLNRAGVELVASSDASLQFGDILNLVGRPSSIDAVANVVGNAQQKLQQVQMLPVFIGIGLGVLLGSIPLFVPGFPVALKLGLAGGPLIMALILGRIGSIGKLYWFMPPSANLALRELGIVLFLAVVGLKSGGDFIDTLTQGDGLSWIGYGIFITAIPLITVGLLARIFAKMNYLTLCGMLAGSMTDPPALAFANNLHATSGAAALSYATVYPLVMFLRIITPQLLAVLFWGLG.

5 helical membrane-spanning segments follow: residues 4 to 24 (IALTVSVLALVAVVGLWIGNI), 28 to 48 (GVGFGIGGVLFGGIIVGHFVD), 65 to 85 (FGLILFVYTIGIQVGPGFFAS), 95 to 115 (LFAILIVIIGGLVTAILHKIF), and 158 to 178 (MSYAMAYPFGICGILLTMWLM). RCK C-terminal domains are found at residues 192-276 (QHED…VIGQ) and 279-361 (DTSL…VVGN). The next 6 helical transmembrane spans lie at 371–391 (MLPVFIGIGLGVLLGSIPLFV), 393–413 (GFPVALKLGLAGGPLIMALIL), 437–457 (LGIVLFLAVVGLKSGGDFIDT), 464–484 (LSWIGYGIFITAIPLITVGLL), 493–513 (YLTLCGMLAGSMTDPPALAFA), and 533–553 (LVMFLRIITPQLLAVLFWGLG).

Belongs to the AAE transporter (TC 2.A.81) family. YidE subfamily.

It is found in the cell membrane. This chain is Putative transport protein CKO_00031, found in Citrobacter koseri (strain ATCC BAA-895 / CDC 4225-83 / SGSC4696).